We begin with the raw amino-acid sequence, 151 residues long: Small ribosomal subunit protein uS15 (151 aa).

This sequence belongs to the universal ribosomal protein uS15 family. As to quaternary structure, component of the small ribosomal subunit.

The protein localises to the cytoplasm. Functionally, component of the small ribosomal subunit. The ribosome is a large ribonucleoprotein complex responsible for the synthesis of proteins in the cell. The sequence is that of Small ribosomal subunit protein uS15 (rps13) from Gillichthys mirabilis (Long-jawed mudsucker).